The following is a 486-amino-acid chain: Cardiolipin synthase A (486 aa).

2 consecutive transmembrane segments (helical) span residues 3–23 and 38–58; these read IFYN…IANI and MSWL…WFFF. PLD phosphodiesterase domains are found at residues 219–246 and 399–426; these read VDVR…VDPY and QKGL…DMRS. Active-site residues include His-224, Lys-226, Asp-231, His-404, Lys-406, and Asp-411.

It belongs to the phospholipase D family. Cardiolipin synthase subfamily. ClsA sub-subfamily.

It localises to the cell inner membrane. It catalyses the reaction 2 a 1,2-diacyl-sn-glycero-3-phospho-(1'-sn-glycerol) = a cardiolipin + glycerol. In terms of biological role, catalyzes the reversible phosphatidyl group transfer from one phosphatidylglycerol molecule to another to form cardiolipin (CL) (diphosphatidylglycerol) and glycerol. The chain is Cardiolipin synthase A from Buchnera aphidicola subsp. Acyrthosiphon pisum (strain 5A).